The following is a 511-amino-acid chain: MNGIKQLHAHCLRTGVDETKDLLQRLLLIPNLVYARKLFDHHQNSCTFLYNKLIQAYYVHHQPHESIVLYNLLSFDGLRPSHHTFNFIFAASASFSSARPLRLLHSQFFRSGFESDSFCCTTLITAYAKLGALCCARRVFDEMSKRDVPVWNAMITGYQRRGDMKAAMELFDSMPRKNVTSWTTVISGFSQNGNYSEALKMFLCMEKDKSVKPNHITVVSVLPACANLGELEIGRRLEGYARENGFFDNIYVCNATIEMYSKCGMIDVAKRLFEELGNQRNLCSWNSMIGSLATHGKHDEALTLFAQMLREGEKPDAVTFVGLLLACVHGGMVVKGQELFKSMEEVHKISPKLEHYGCMIDLLGRVGKLQEAYDLIKTMPMKPDAVVWGTLLGACSFHGNVEIAEIASEALFKLEPTNPGNCVIMSNIYAANEKWDGVLRMRKLMKKETMTKAAGYSYFVEVGVDVHKFTVEDKSHPRSYEIYQVLEEIFRRMKLEKSRFDSLLQPEQLCI.

PPR repeat units follow at residues 46-80, 81-115, 116-146, 147-181, 182-213, 214-248, 249-279, 281-315, 316-346, and 352-382; these read CTFLYNKLIQAYYVHHQPHESIVLYNLLSFDGLRP, SHHTFNFIFAASASFSSARPLRLLHSQFFRSGFES, DSFCCTTLITAYAKLGALCCARRVFDEMSKR, DVPVWNAMITGYQRRGDMKAAMELFDSMPRKNVTS, WTTVISGFSQNGNYSEALKMFLCMEKDKSVKP, NHITVVSVLPACANLGELEIGRRLEGYARENGFFD, NIYVCNATIEMYSKCGMIDVAKRLFEELGNQ, NLCSWNSMIGSLATHGKHDEALTLFAQMLREGEKP, DAVTFVGLLLACVHGGMVVKGQELFKSMEEV, and KLEHYGCMIDLLGRVGKLQEAYDLIKTMPMK. The segment at 387–462 is type E motif; the sequence is VWGTLLGACS…AAGYSYFVEV (76 aa). Positions 463–494 are type E(+) motif; the sequence is GVDVHKFTVEDKSHPRSYEIYQVLEEIFRRMK.

The protein belongs to the PPR family. PCMP-E subfamily.

The chain is Pentatricopeptide repeat-containing protein At5g08510 (PCMP-E20) from Arabidopsis thaliana (Mouse-ear cress).